The sequence spans 213 residues: mRNA-decapping protein OPG121 (213 aa).

Residues Glu16 and Arg50 each coordinate N(7)-methyl-GTP. In terms of domain architecture, Nudix hydrolase spans 30-209 (KDTHVFAACI…EYLSYIYNML (180 aa)). A Nudix box motif is present at residues 111–132 (GKLDKKESIKDCLRRELKEESD). The Nucleophile role is filled by Glu126. Residues Glu126 and Glu130 each contribute to the Mg(2+) site. Asp151 contributes to the N(7)-methyl-GTP binding site. Position 183 (Glu183) interacts with Mg(2+).

It belongs to the Nudix hydrolase family. Mg(2+) is required as a cofactor. Requires Mn(2+) as cofactor.

It catalyses the reaction a 5'-end (N(7)-methyl 5'-triphosphoguanosine)-guanosine in mRNA + H2O = a 5'-end phospho-guanosine in mRNA + N(7)-methyl-GDP + 2 H(+). Decapping enzyme that remove the protective 5'-cap from both host and viral mRNAs to commit transcripts for decay by the cellular exonuclease XRN1. Accelerates viral and cellular mRNA turnover to eliminate competing host mRNAs and allow stage-specific synthesis of viral proteins. Acceleration of the turnover of cellular transcripts may even promote the shutoff of host protein synthesis. In Vaccinia virus (strain Western Reserve) (VACV), this protein is mRNA-decapping protein OPG121 (OPG121).